A 464-amino-acid polypeptide reads, in one-letter code: tRNA modification GTPase MnmE (464 aa).

Residues arginine 26, glutamate 92, and arginine 131 each contribute to the (6S)-5-formyl-5,6,7,8-tetrahydrofolate site. Residues 227–385 (GIKVAILGRV…LISALKDYVS (159 aa)) form the TrmE-type G domain. Residue asparagine 237 participates in K(+) binding. Residues 237–242 (NAGKSS), 256–262 (SNIAGTT), and 281–284 (DTAG) contribute to the GTP site. Serine 241 provides a ligand contact to Mg(2+). Positions 256, 258, and 261 each coordinate K(+). Residue threonine 262 participates in Mg(2+) binding. Residue lysine 464 coordinates (6S)-5-formyl-5,6,7,8-tetrahydrofolate.

The protein belongs to the TRAFAC class TrmE-Era-EngA-EngB-Septin-like GTPase superfamily. TrmE GTPase family. As to quaternary structure, homodimer. Heterotetramer of two MnmE and two MnmG subunits. Requires K(+) as cofactor.

It is found in the cytoplasm. Its function is as follows. Exhibits a very high intrinsic GTPase hydrolysis rate. Involved in the addition of a carboxymethylaminomethyl (cmnm) group at the wobble position (U34) of certain tRNAs, forming tRNA-cmnm(5)s(2)U34. This is tRNA modification GTPase MnmE from Brachyspira hyodysenteriae (strain ATCC 49526 / WA1).